Consider the following 288-residue polypeptide: Alpha/beta hydrolase domain-containing protein 17B (288 aa).

Residues S170, D235, and H264 each act as charge relay system in the active site. S282 bears the Phosphoserine mark.

This sequence belongs to the AB hydrolase superfamily. ABHD17 family. Palmitoylated on cysteine residues located in a cysteine cluster at the N-terminus which promotes membrane localization. Palmitoylation is required for post-synaptic localization and for depalmitoylating activity towards DLG4/PSD95.

The protein localises to the cell membrane. It is found in the recycling endosome membrane. The protein resides in the cell projection. Its subcellular location is the dendritic spine. It localises to the postsynaptic density membrane. It catalyses the reaction S-hexadecanoyl-L-cysteinyl-[protein] + H2O = L-cysteinyl-[protein] + hexadecanoate + H(+). Its activity is regulated as follows. Inhibited by palmostatin-B. Its function is as follows. Hydrolyzes fatty acids from S-acylated cysteine residues in proteins. Has depalmitoylating activity towards DLG4/PSD95. Has depalmitoylating activity towards GAP43. Has depalmitoylating activity towards MAP6. Has depalmitoylating activity towards NRAS. This is Alpha/beta hydrolase domain-containing protein 17B from Homo sapiens (Human).